The sequence spans 93 residues: Microcin N immunity protein (93 aa).

Transmembrane regions (helical) follow at residues 3–23 (FLNFAFSPVFFSIMACYFIVW), 36–56 (LSIIIISFLICFIYPWLNYKI), and 68–88 (LFCFLSSLVAVVINLIVYFIL).

This sequence belongs to the MceB microcin immunity protein family.

It localises to the cell inner membrane. Probably able to protect the producing cell against microcin N (microcin 24). This Escherichia coli protein is Microcin N immunity protein.